Consider the following 223-residue polypeptide: MQLKPMEINPEMLNKVLSRLGVAGQWRFVDVLGLEEDSLGSVPAPACALLLLFPLTAQHENFRKKQIEELKGQEVSPKVYFMKQTIGNSCGTIGLIHAVANNQDKLGFEDGSVLKQFLSETEKMSPEDRAKCFEKNEAIQAAHDAVAQEGQCRVDDKVNFHFILFNNVDGHLYELDGRMPFPVNHGASSEGTLLQDAAKVCREFTEREQGEVRFSAVALCKAA.

Methionine 1 carries the post-translational modification N-acetylmethionine. In terms of domain architecture, UCH catalytic spans 2-221 (QLKPMEINPE…VRFSAVALCK (220 aa)). Residues 5–10 (PMEINP) are interaction with ubiquitin. Cysteine 90 acts as the Nucleophile in catalysis. A Phosphoserine modification is found at serine 125. Histidine 161 (proton donor) is an active-site residue. The segment at 211 to 216 (EVRFSA) is interaction with ubiquitin. Cysteine 220 is lipidated: S-farnesyl cysteine. A propeptide spans 221–223 (KAA) (removed in mature form).

This sequence belongs to the peptidase C12 family. Monomer. Homodimer. Interacts with COPS5 and SNCA. Post-translationally, O-glycosylated. In terms of tissue distribution, expressed in the placenta at all stages of pregnancy. Expression increases as pregnancy progresses.

Its subcellular location is the cytoplasm. It localises to the endoplasmic reticulum membrane. The protein resides in the nucleus. It catalyses the reaction Thiol-dependent hydrolysis of ester, thioester, amide, peptide and isopeptide bonds formed by the C-terminal Gly of ubiquitin (a 76-residue protein attached to proteins as an intracellular targeting signal).. Ubiquitin-protein hydrolase involved both in the processing of ubiquitin precursors and of ubiquitinated proteins. This enzyme is a thiol protease that recognizes and hydrolyzes a peptide bond at the C-terminal glycine of ubiquitin. Also binds to free monoubiquitin and may prevent its degradation in lysosomes. The homodimer may have ATP-independent ubiquitin ligase activity. This chain is Ubiquitin carboxyl-terminal hydrolase isozyme L1 (UCHL1), found in Macaca fascicularis (Crab-eating macaque).